A 335-amino-acid chain; its full sequence is Transmembrane protein 120B-A (335 aa).

Residues M1–L40 are a coiled coil. A run of 6 helical transmembrane segments spans residues G100–A122, F130–N150, V157–I177, V193–F213, F268–F288, and Q300–L320.

The protein belongs to the TMEM120 family.

It localises to the nucleus inner membrane. Necessary for efficient adipogenesis. Does not show ion channel activity. The chain is Transmembrane protein 120B-A (tmem120b-a) from Xenopus laevis (African clawed frog).